A 155-amino-acid polypeptide reads, in one-letter code: MGLQEDFEEYAEKVKTLPESTSNEDKLILYGLYKQATVGDVNTSRPGIFAQRDRAKWDAWKAVEGKSKEEAMSDYITKVKQLQEEAAALKAVFRAYLVGEMNIFECHIGRLTRCRRGFRTQMKKQIVYSPGTREMNLLSLIKPSLAHVGYCSTYG.

Residues 3-88 (LQEDFEEYAE…VKQLQEEAAA (86 aa)) form the ACB domain. An acyl-CoA-binding positions include K15, 30-34 (YGLYK), K56, and Y75.

The protein belongs to the ACBP family. In terms of tissue distribution, highly expressed in leaves. Expressed at low levels in roots and seeds.

It is found in the cytoplasm. It localises to the cytosol. Functionally, binds medium- and long-chain acyl-CoA esters with high affinity. Can interact in vitro with linolenoyl-CoA. Binds phosphatidic acid (PA) and phosphatidylcholine (PC) in vitro. May play a role in the biosynthesis of phospholipids. This is Acyl-CoA-binding domain-containing protein 3 from Oryza sativa subsp. japonica (Rice).